The following is a 658-amino-acid chain: DNA ligase (658 aa).

Residues 31–35, 80–81, and glutamate 110 each bind NAD(+); these read DFEYD and SL. Lysine 112 (N6-AMP-lysine intermediate) is an active-site residue. The NAD(+) site is built by arginine 133, glutamate 167, lysine 279, and lysine 303. Cysteine 397, cysteine 400, cysteine 415, and cysteine 420 together coordinate Zn(2+). A BRCT domain is found at 584 to 654; it reads DTASIYFQKS…KALNIPIINE (71 aa).

The protein belongs to the NAD-dependent DNA ligase family. LigA subfamily. Requires Mg(2+) as cofactor. The cofactor is Mn(2+).

The catalysed reaction is NAD(+) + (deoxyribonucleotide)n-3'-hydroxyl + 5'-phospho-(deoxyribonucleotide)m = (deoxyribonucleotide)n+m + AMP + beta-nicotinamide D-nucleotide.. Its function is as follows. DNA ligase that catalyzes the formation of phosphodiester linkages between 5'-phosphoryl and 3'-hydroxyl groups in double-stranded DNA using NAD as a coenzyme and as the energy source for the reaction. It is essential for DNA replication and repair of damaged DNA. This chain is DNA ligase, found in Mycoplasma pneumoniae (strain ATCC 29342 / M129 / Subtype 1) (Mycoplasmoides pneumoniae).